A 336-amino-acid polypeptide reads, in one-letter code: Transmembrane protease serine 12 (336 aa).

The N-terminal stretch at 1 to 18 (MASWALSAALLCLGGAFA) is a signal peptide. Over 19–312 (YSELHSLSLR…HYLSQGNINR (294 aa)) the chain is Extracellular. Residues 66 to 306 (IIGGSQADTG…FQEWMTHYLS (241 aa)) form the Peptidase S1 domain. A disulfide bridge connects residues Cys-95 and Cys-111. Residues His-110 and Asp-159 each act as charge relay system in the active site. 3 disulfides stabilise this stretch: Cys-194/Cys-262, Cys-225/Cys-241, and Cys-252/Cys-282. Asn-207, Asn-237, and Asn-246 each carry an N-linked (GlcNAc...) asparagine glycan. The active-site Charge relay system is the Ser-256. The chain crosses the membrane as a helical span at residues 313-333 (LFNMDIVLGQVLTALGSVILL). At 334-336 (GVT) the chain is on the cytoplasmic side.

The protein belongs to the peptidase S1 family. In terms of tissue distribution, exclusively expressed in the testis, from spermatocytes to elongated spermatids (at protein level).

The protein localises to the cell membrane. It is found in the cytoplasmic vesicle. It localises to the secretory vesicle. The protein resides in the acrosome. In terms of biological role, required for male fertility. Plays a critical role in sperm capacitation and acrosome reactions during fertilization, and also plays a role in the regulation of proteins involved in spermatogenesis. Regulates protein pathways that promote chromosomal synapsis formation, double-strand break repair, formation of the inner mitochondrial membrane cristae and apoptosis in developing sperm. Required for normal sperm motility and binding to the zona pellucida, potentially via a role in ADAM3 protein maturation. The protein is Transmembrane protease serine 12 of Mus musculus (Mouse).